A 113-amino-acid polypeptide reads, in one-letter code: Cytochrome c (113 aa).

Ala1 is subject to N-acetylalanine. Heme c contacts are provided by Cys22, Cys25, and His26. Position 80 is an N6,N6,N6-trimethyllysine (Lys80). Residue Met88 participates in heme c binding. Position 94 is an N6,N6,N6-trimethyllysine (Lys94).

This sequence belongs to the cytochrome c family. Binds 1 heme c group covalently per subunit.

The protein localises to the mitochondrion intermembrane space. In terms of biological role, electron carrier protein. The oxidized form of the cytochrome c heme group can accept an electron from the heme group of the cytochrome c1 subunit of cytochrome reductase. Cytochrome c then transfers this electron to the cytochrome oxidase complex, the final protein carrier in the mitochondrial electron-transport chain. This Ginkgo biloba (Ginkgo) protein is Cytochrome c.